The sequence spans 274 residues: uncharacterized protein (274 aa).

The segment at 253 to 274 is disordered; the sequence is QTGDVRTTEGTALTDDTTKRNI.

This is an uncharacterized protein from Deinococcus radiodurans (strain ATCC 13939 / DSM 20539 / JCM 16871 / CCUG 27074 / LMG 4051 / NBRC 15346 / NCIMB 9279 / VKM B-1422 / R1).